Here is a 435-residue protein sequence, read N- to C-terminus: 3-phosphoshikimate 1-carboxyvinyltransferase (435 aa).

3-phosphoshikimate-binding residues include Lys21, Ser22, and Arg26. Residue Lys21 coordinates phosphoenolpyruvate. Phosphoenolpyruvate contacts are provided by Gly100 and Arg128. Ser171, Ser172, Gln173, Ser199, Asp313, and Lys340 together coordinate 3-phosphoshikimate. Gln173 serves as a coordination point for phosphoenolpyruvate. Catalysis depends on Asp313, which acts as the Proton acceptor. Arg344, Arg386, and Lys412 together coordinate phosphoenolpyruvate.

It belongs to the EPSP synthase family. As to quaternary structure, monomer.

The protein localises to the cytoplasm. It carries out the reaction 3-phosphoshikimate + phosphoenolpyruvate = 5-O-(1-carboxyvinyl)-3-phosphoshikimate + phosphate. It functions in the pathway metabolic intermediate biosynthesis; chorismate biosynthesis; chorismate from D-erythrose 4-phosphate and phosphoenolpyruvate: step 6/7. Functionally, catalyzes the transfer of the enolpyruvyl moiety of phosphoenolpyruvate (PEP) to the 5-hydroxyl of shikimate-3-phosphate (S3P) to produce enolpyruvyl shikimate-3-phosphate and inorganic phosphate. The polypeptide is 3-phosphoshikimate 1-carboxyvinyltransferase (Clostridium novyi (strain NT)).